Reading from the N-terminus, the 300-residue chain is MEPPMDPSGGEQEPGAVRLLDLPWEDVLLPHVLSRVPLRQLLWLQRVSRAFRALVQLHLARLRRFDAAQVGPQIPRAALAWLLRDAEGLQELALAPCHEWLSDEDLVPVLARNPQLRSVALAGCGQLSRRALGALAEGCPRLQRLSLAHCDWVDGLALRGLADRCPALEELDLTACRQLKDEAIVYLAQRRGAGLRNLSLAVNANVGDTAVQELARNCPELQHLDLTGCLRVGSDGIRTLAEYCPALRSLRVRHCHHVAEPSLSRLRKRGVDIDVEPPLHQALVLLQDMVGFAPFVNLQV.

Residue methionine 1 is modified to N-acetylmethionine. The region spanning 19 to 66 (LLDLPWEDVLLPHVLSRVPLRQLLWLQRVSRAFRALVQLHLARLRRFD) is the F-box domain. Positions 113–269 (NPQLRSVALA…EPSLSRLRKR (157 aa)) are interaction with SMURF1. LRR repeat units follow at residues 141–162 (RLQRLSLAHCDWVDGLALRGLA), 167–188 (ALEELDLTACRQLKDEAIVYLA), 194–215 (GLRNLSLAVNANVGDTAVQELA), 220–241 (ELQHLDLTGCLRVGSDGIRTLA), and 246–267 (ALRSLRVRHCHHVAEPSLSRLR).

It belongs to the FBXL15 family. In terms of assembly, part of the SCF (SKP1-CUL1-F-box) E3 ubiquitin-protein ligase complex SCF(FBXL15) composed of CUL1, SKP1, RBX1 and FBXL15.

Its subcellular location is the cytoplasm. Its pathway is protein modification; protein ubiquitination. Substrate recognition component of a SCF (SKP1-CUL1-F-box protein) E3 ubiquitin-protein ligase complex which mediates the ubiquitination and subsequent proteasomal degradation of SMURF1, thereby acting as a positive regulator of the BMP signaling pathway. Required for dorsal/ventral pattern formation and bone mass maintenance. Also mediates ubiquitination of SMURF2 and WWP2. This Bos taurus (Bovine) protein is F-box/LRR-repeat protein 15 (FBXL15).